A 35-amino-acid chain; its full sequence is PTEN upstream open reading frame MP31 (35 aa).

In terms of assembly, interacts with lactate dehydrogenases LDHA and LDHB; interaction with mitochondrial LDH leads to inhibition of lactate dehydrogenase activity, preventing conversion of lactate to pyruvate. Detected in brain, kidney and liver (at protein level).

The protein localises to the mitochondrion. Inhibits lactate dehydrogenase (LDH)-mediated conversion of lactate to pyruvate in mitochondria by competing with mitochondrial LDH for binding to NAD(+). Also inhibits cellular lactate utilization. The protein is PTEN upstream open reading frame MP31 of Mus musculus (Mouse).